The chain runs to 313 residues: tRNA uridine(34) hydroxylase (313 aa).

Positions Ser124–Thr218 constitute a Rhodanese domain. Cys178 functions as the Cysteine persulfide intermediate in the catalytic mechanism.

It belongs to the TrhO family.

The catalysed reaction is uridine(34) in tRNA + AH2 + O2 = 5-hydroxyuridine(34) in tRNA + A + H2O. Catalyzes oxygen-dependent 5-hydroxyuridine (ho5U) modification at position 34 in tRNAs. The protein is tRNA uridine(34) hydroxylase of Pseudomonas fluorescens (strain Pf0-1).